Consider the following 77-residue polypeptide: MVKLRLKRYGRKGQVTYRIVAMNNLSRRDGKAIEELGFYNPRTNESSLNIANIKRRIEQGAQPTNTVRYILAKANIL.

This sequence belongs to the bacterial ribosomal protein bS16 family.

Its subcellular location is the plastid. The protein localises to the cyanelle. This is Small ribosomal subunit protein bS16c from Cyanophora paradoxa.